Here is a 378-residue protein sequence, read N- to C-terminus: UDP-N-acetylglucosamine--N-acetylmuramyl-(pentapeptide) pyrophosphoryl-undecaprenol N-acetylglucosamine transferase (378 aa).

Residues T14–G16, N125, R165, S193, and Q293 contribute to the UDP-N-acetyl-alpha-D-glucosamine site.

Belongs to the glycosyltransferase 28 family. MurG subfamily.

It is found in the cell inner membrane. It catalyses the reaction di-trans,octa-cis-undecaprenyl diphospho-N-acetyl-alpha-D-muramoyl-L-alanyl-D-glutamyl-meso-2,6-diaminopimeloyl-D-alanyl-D-alanine + UDP-N-acetyl-alpha-D-glucosamine = di-trans,octa-cis-undecaprenyl diphospho-[N-acetyl-alpha-D-glucosaminyl-(1-&gt;4)]-N-acetyl-alpha-D-muramoyl-L-alanyl-D-glutamyl-meso-2,6-diaminopimeloyl-D-alanyl-D-alanine + UDP + H(+). The protein operates within cell wall biogenesis; peptidoglycan biosynthesis. Cell wall formation. Catalyzes the transfer of a GlcNAc subunit on undecaprenyl-pyrophosphoryl-MurNAc-pentapeptide (lipid intermediate I) to form undecaprenyl-pyrophosphoryl-MurNAc-(pentapeptide)GlcNAc (lipid intermediate II). The sequence is that of UDP-N-acetylglucosamine--N-acetylmuramyl-(pentapeptide) pyrophosphoryl-undecaprenol N-acetylglucosamine transferase from Bartonella quintana (strain Toulouse) (Rochalimaea quintana).